Here is a 1013-residue protein sequence, read N- to C-terminus: MDIS1-interacting receptor like kinase 1 (1013 aa).

An N-terminal signal peptide occupies residues 1-23 (MKMKIIVLFLYYCYIGSTSSVLA). Residues 24 to 633 (SIDNVNELSV…SSHSSLHGKR (610 aa)) are Extracellular-facing. N-linked (GlcNAc...) asparagine glycans are attached at residues asparagine 61, asparagine 82, asparagine 101, asparagine 137, asparagine 146, asparagine 151, and asparagine 155. LRR repeat units lie at residues 70–94 (NGNVEKLDLAGMNLTGKISDSISQL), 95–117 (SSLVSFNISCNGFESLLPKSIPP), 119–137 (KSIDISQNSFSGSLFLFSN), 139–163 (SLGLVHLNASGNNLSGNLTEDLGNL), 164–186 (VSLEVLDLRGNFFQGSLPSSFKN), 187–213 (LQKLRFLGLSGNNLTGELPSVLGQLPS), 215–234 (ETAILGYNEFKGPIPPEFGN), 235–259 (INSLKYLDLAIGKLSGEIPSELGKL), 260–283 (KSLETLLLYENNFTGTIPREIGSI), 284–307 (TTLKVLDFSDNALTGEIPMEITKL), 308–331 (KNLQLLNLMRNKLSGSIPPAISSL), 333–355 (QLQVLELWNNTLSGELPSDLGKN), 357–379 (PLQWLDVSSNSFSGEIPSTLCNK), 381–403 (NLTKLILFNNTFTGQIPATLSTC), 405–426 (SLVRVRMQNNLLNGSIPIGFGK), 427–451 (LEKLQRLELAGNRLSGGIPGDISDS), 453–475 (SLSFIDFSRNQIRSSLPSTILSI), 477–498 (NLQAFLVADNFISGEVPDQFQD), 499–523 (CPSLSNLDLSSNTLTGTIPSSIASC), 525–547 (KLVSLNLRNNNLTGEIPRQITTM), 548–571 (SALAVLDLSNNSLTGVLPESIGTS), and 573–595 (ALELLNVSYNKLTGPVPINGFLK). Residue asparagine 199 is glycosylated (N-linked (GlcNAc...) asparagine). N-linked (GlcNAc...) asparagine glycosylation is present at asparagine 271. Residue asparagine 341 is glycosylated (N-linked (GlcNAc...) asparagine). N-linked (GlcNAc...) asparagine glycans are attached at residues asparagine 381, asparagine 389, and asparagine 417. Residues asparagine 535, asparagine 557, and asparagine 578 are each glycosylated (N-linked (GlcNAc...) asparagine). Residues 634-654 (IVAGWLIGIASVLALGILTIV) form a helical membrane-spanning segment. The Cytoplasmic portion of the chain corresponds to 655–1013 (TRTLYKKWYS…FSTSPVNGLL (359 aa)). A Phosphothreonine modification is found at threonine 691. In terms of domain architecture, Protein kinase spans 699-983 (IKESNMIGMG…SMLGEAKPRR (285 aa)). Residues 705–713 (IGMGATGIV) and lysine 728 contribute to the ATP site. The residue at position 710 (threonine 710) is a Phosphothreonine; by autocatalysis. Threonine 741 and threonine 742 each carry phosphothreonine; by autocatalysis. 2 positions are modified to phosphotyrosine: tyrosine 777 and tyrosine 818. Aspartate 831 functions as the Proton acceptor in the catalytic mechanism. At threonine 862 the chain carries Phosphothreonine; by autocatalysis. Serine 864 bears the Phosphoserine; by autocatalysis mark. Tyrosine 872 bears the Phosphotyrosine mark. Tyrosine 879 bears the Phosphotyrosine; by autocatalysis mark. A phosphothreonine; by autocatalysis mark is found at threonine 880 and threonine 992. The tract at residues 976–1013 (LGEAKPRRKSNSNEENTSRSLAEKHSSVFSTSPVNGLL) is disordered. A compositionally biased stretch (polar residues) spans 1002-1013 (SVFSTSPVNGLL).

The protein belongs to the protein kinase superfamily. Ser/Thr protein kinase family. In terms of assembly, homodimer. Interacts with MDIS1 and LURE1.2. In terms of processing, autophosphorylation induced by the interaction with LURE1.2. Expressed in pollen tubes.

Its subcellular location is the cell membrane. The catalysed reaction is L-seryl-[protein] + ATP = O-phospho-L-seryl-[protein] + ADP + H(+). It catalyses the reaction L-threonyl-[protein] + ATP = O-phospho-L-threonyl-[protein] + ADP + H(+). Its function is as follows. Involved in the regulation of procambium maintenance and polarity during vascular-tissue development. Involved in the pollen tube perception of the female signal. Phosphorylates MDSI1. The chain is MDIS1-interacting receptor like kinase 1 from Arabidopsis thaliana (Mouse-ear cress).